We begin with the raw amino-acid sequence, 233 residues long: Ribosome-recycling factor, mitochondrial (233 aa).

It belongs to the RRF family.

Its subcellular location is the mitochondrion. In terms of biological role, necessary for protein synthesis in mitochondria. Functions as a ribosome recycling factor in mitochondria. This Candida glabrata (strain ATCC 2001 / BCRC 20586 / JCM 3761 / NBRC 0622 / NRRL Y-65 / CBS 138) (Yeast) protein is Ribosome-recycling factor, mitochondrial (RRF1).